The chain runs to 1030 residues: MSENSTDSKNFQFSEGSRESSNDELKVLLRDTETKEDEKSSFSNSEEESIIENLSDSSVNKEYAKNSLKLSDAVSESKYLNPLLKDKRHDRSFALHKVVVPDDYDYIPLNKHIPSDPPAKTYPFELDPFQSTAIKCVERMESVLVSAHTSAGKTVIAEYAIAQALKNRQRVIYTSPIKSLSNQKYRELLSEFGDVGLMTGDVSINPSASCLIMTTEILRAMLYKNSEIMHEIAWVIFDEVHYMRDKDRGVVWEETLILLPDAIRFIFLSATLPNALQFARWISEIHKQPCHVVYTDYRPTPLQHFIYPQGADGIYMLVDEKNKFKTENFKKVLEVLDHSTRQENYSKSSKKVKKSSSLERIINMVLSNRYDPIIVFCFSKKECEINAHQFGKLDLNDTENKELVTEIFDSAINQLSEEDRGLRQFEEMRSLLLRGIGIHHSGLLPILKELVEILFQEGLVRILFATETFSIGLNMPARTVLFTKAQKFSGNNFRWLTSGEYMQMSGRAGRRGIDTKGLSIVILDQSIDEQAARCLMNGQADVLNSAFHLSYGMILNLMRIEEISPEDILKKSFYQFQNMESLPLIKEELMQLKNEETSINIPNETAVKEFHDLKLQLEKYGEEIQKVMTHPDNCLPYLQSGRLIQIKLGGIIFPWGVLVNVIKREFDPNTREQVAPHETYVLDVLLPISSNSMSNHKVNPSILVPPRPNETPLYEIVSVLLTAVCNISSIRIYMPRELNSNESKLRAYRRVNEVIEEFKEIPYLDPLEHMHIESSTLSLSLRKLEILEPKLFDSPYYKDSKHRAEYHEFRKKLNLRAQIKDISTKITNTEAIIQLRELKIRQRVLRRLGFCTLENVIDIKGRVACEITSGDELLLVELIFQGFFNQMPPEEIAAALSCFVYEDKSEVSTLNLKEPFKKMYLTIIEAAKRIATVSLESKLQFNESDYLHQFKPDIMEPVSLWINGASFQEICIVSKLYEGSIVRTFRRLDELLKQLEHAAIVLGNNELKEKSVLTEQKLHRDIIFSASLYL.

Positions 1–15 are enriched in polar residues; the sequence is MSENSTDSKNFQFSE. Positions 1–53 are disordered; sequence MSENSTDSKNFQFSEGSRESSNDELKVLLRDTETKEDEKSSFSNSEEESIIEN. Residues 16–40 are compositionally biased toward basic and acidic residues; that stretch reads GSRESSNDELKVLLRDTETKEDEKS. Ser-41 is modified (phosphoserine). A Helicase ATP-binding domain is found at 134-290; sequence IKCVERMESV…WISEIHKQPC (157 aa). 147-154 lines the ATP pocket; it reads AHTSAGKT. The DEVH box signature appears at 238-241; that stretch reads DEVH. Residues 357-561 enclose the Helicase C-terminal domain; sequence SLERIINMVL…GMILNLMRIE (205 aa).

This sequence belongs to the helicase family. SKI2 subfamily.

Its subcellular location is the nucleus. This is an uncharacterized protein from Schizosaccharomyces pombe (strain 972 / ATCC 24843) (Fission yeast).